The following is a 114-amino-acid chain: Ribosome-binding factor A (114 aa).

This sequence belongs to the RbfA family. As to quaternary structure, monomer. Binds 30S ribosomal subunits, but not 50S ribosomal subunits or 70S ribosomes.

The protein resides in the cytoplasm. In terms of biological role, one of several proteins that assist in the late maturation steps of the functional core of the 30S ribosomal subunit. Associates with free 30S ribosomal subunits (but not with 30S subunits that are part of 70S ribosomes or polysomes). Required for efficient processing of 16S rRNA. May interact with the 5'-terminal helix region of 16S rRNA. This chain is Ribosome-binding factor A, found in Phytoplasma mali (strain AT).